Here is a 485-residue protein sequence, read N- to C-terminus: Ribulose bisphosphate carboxylase large chain (485 aa).

Positions 1–2 (MS) are excised as a propeptide. Position 3 is an N-acetylproline (Pro3). Lys14 is subject to N6,N6,N6-trimethyllysine. Substrate-binding residues include Asn123 and Thr173. Lys175 (proton acceptor) is an active-site residue. Lys177 lines the substrate pocket. Mg(2+) contacts are provided by Lys201, Asp203, and Glu204. Residue Lys201 is modified to N6-carboxylysine. His294 functions as the Proton acceptor in the catalytic mechanism. Positions 295, 327, and 379 each coordinate substrate.

It belongs to the RuBisCO large chain family. Type I subfamily. In terms of assembly, heterohexadecamer of 8 large chains and 8 small chains; disulfide-linked. The disulfide link is formed within the large subunit homodimers. Requires Mg(2+) as cofactor. In terms of processing, the disulfide bond which can form in the large chain dimeric partners within the hexadecamer appears to be associated with oxidative stress and protein turnover.

Its subcellular location is the plastid. The protein resides in the chloroplast. The enzyme catalyses 2 (2R)-3-phosphoglycerate + 2 H(+) = D-ribulose 1,5-bisphosphate + CO2 + H2O. It catalyses the reaction D-ribulose 1,5-bisphosphate + O2 = 2-phosphoglycolate + (2R)-3-phosphoglycerate + 2 H(+). Its function is as follows. RuBisCO catalyzes two reactions: the carboxylation of D-ribulose 1,5-bisphosphate, the primary event in carbon dioxide fixation, as well as the oxidative fragmentation of the pentose substrate in the photorespiration process. Both reactions occur simultaneously and in competition at the same active site. The sequence is that of Ribulose bisphosphate carboxylase large chain from Flaveria pringlei.